The chain runs to 397 residues: Tryptophan synthase beta chain (397 aa).

K87 bears the N6-(pyridoxal phosphate)lysine mark.

Belongs to the TrpB family. In terms of assembly, tetramer of two alpha and two beta chains. It depends on pyridoxal 5'-phosphate as a cofactor.

The enzyme catalyses (1S,2R)-1-C-(indol-3-yl)glycerol 3-phosphate + L-serine = D-glyceraldehyde 3-phosphate + L-tryptophan + H2O. It participates in amino-acid biosynthesis; L-tryptophan biosynthesis; L-tryptophan from chorismate: step 5/5. Its function is as follows. The beta subunit is responsible for the synthesis of L-tryptophan from indole and L-serine. This Escherichia fergusonii (strain ATCC 35469 / DSM 13698 / CCUG 18766 / IAM 14443 / JCM 21226 / LMG 7866 / NBRC 102419 / NCTC 12128 / CDC 0568-73) protein is Tryptophan synthase beta chain.